A 185-amino-acid chain; its full sequence is Large ribosomal subunit protein uL5 (185 aa).

It belongs to the universal ribosomal protein uL5 family. As to quaternary structure, part of the 50S ribosomal subunit; part of the 5S rRNA/L5/L18/L25 subcomplex. Contacts the 5S rRNA and the P site tRNA. Forms a bridge to the 30S subunit in the 70S ribosome.

Its function is as follows. This is one of the proteins that bind and probably mediate the attachment of the 5S RNA into the large ribosomal subunit, where it forms part of the central protuberance. In the 70S ribosome it contacts protein S13 of the 30S subunit (bridge B1b), connecting the 2 subunits; this bridge is implicated in subunit movement. Contacts the P site tRNA; the 5S rRNA and some of its associated proteins might help stabilize positioning of ribosome-bound tRNAs. This chain is Large ribosomal subunit protein uL5, found in Magnetococcus marinus (strain ATCC BAA-1437 / JCM 17883 / MC-1).